The primary structure comprises 1073 residues: ATP-dependent helicase/deoxyribonuclease subunit B (1073 aa).

It belongs to the helicase family. AddB/RexB type 2 subfamily. Heterodimer of AddA and RexB. It depends on Mg(2+) as a cofactor.

Functionally, the heterodimer acts as both an ATP-dependent DNA helicase and an ATP-dependent, dual-direction single-stranded exonuclease. Recognizes the chi site generating a DNA molecule suitable for the initiation of homologous recombination. This subunit has 5' -&gt; 3' nuclease activity but not helicase activity. In Streptococcus equi subsp. zooepidemicus (strain MGCS10565), this protein is ATP-dependent helicase/deoxyribonuclease subunit B.